Here is a 460-residue protein sequence, read N- to C-terminus: ATP synthase subunit beta (460 aa).

Residue 150–157 (GGAGVGKT) coordinates ATP.

Belongs to the ATPase alpha/beta chains family. In terms of assembly, F-type ATPases have 2 components, CF(1) - the catalytic core - and CF(0) - the membrane proton channel. CF(1) has five subunits: alpha(3), beta(3), gamma(1), delta(1), epsilon(1). CF(0) has three main subunits: a(1), b(2) and c(9-12). The alpha and beta chains form an alternating ring which encloses part of the gamma chain. CF(1) is attached to CF(0) by a central stalk formed by the gamma and epsilon chains, while a peripheral stalk is formed by the delta and b chains.

Its subcellular location is the cell inner membrane. The enzyme catalyses ATP + H2O + 4 H(+)(in) = ADP + phosphate + 5 H(+)(out). Produces ATP from ADP in the presence of a proton gradient across the membrane. The catalytic sites are hosted primarily by the beta subunits. In Shigella dysenteriae serotype 1 (strain Sd197), this protein is ATP synthase subunit beta.